Reading from the N-terminus, the 152-residue chain is Protein-export protein SecB (152 aa).

It belongs to the SecB family. Homotetramer, a dimer of dimers. One homotetramer interacts with 1 SecA dimer.

Its subcellular location is the cytoplasm. In terms of biological role, one of the proteins required for the normal export of preproteins out of the cell cytoplasm. It is a molecular chaperone that binds to a subset of precursor proteins, maintaining them in a translocation-competent state. It also specifically binds to its receptor SecA. The polypeptide is Protein-export protein SecB (Acinetobacter baumannii (strain AB307-0294)).